A 325-amino-acid chain; its full sequence is Thiamine-monophosphate kinase (325 aa).

4 residues coordinate Mg(2+): Asp-30, Ser-45, Thr-46, and Asp-47. Residue His-54 coordinates substrate. Positions 75 and 122 each coordinate Mg(2+). ATP contacts are provided by residues 121–122 (GD) and Arg-146. Asp-212 is a binding site for Mg(2+). Ser-214 serves as a coordination point for ATP. Residue Asp-215 participates in Mg(2+) binding. Substrate is bound by residues Glu-263 and Tyr-319.

This sequence belongs to the thiamine-monophosphate kinase family.

The catalysed reaction is thiamine phosphate + ATP = thiamine diphosphate + ADP. The protein operates within cofactor biosynthesis; thiamine diphosphate biosynthesis; thiamine diphosphate from thiamine phosphate: step 1/1. Its function is as follows. Catalyzes the ATP-dependent phosphorylation of thiamine-monophosphate (TMP) to form thiamine-pyrophosphate (TPP), the active form of vitamin B1. The protein is Thiamine-monophosphate kinase of Escherichia coli O157:H7.